Here is a 1443-residue protein sequence, read N- to C-terminus: ARF guanine-nucleotide exchange factor GNL1 (1443 aa).

An SEC7 domain is found at 554–743 (FVRKVKHIKK…SEIYHSIRHS (190 aa)). The active site involves E658. Disordered regions lie at residues 917-949 (DDPE…AMPR) and 1424-1443 (DQFQ…GNEV). The span at 939-949 (VSQSQPSAMPR) shows a compositional bias: polar residues. A compositionally biased stretch (basic and acidic residues) spans 1425–1435 (QFQRRNAKPED).

Homodimer.

The protein resides in the cytoplasm. It is found in the cytosol. It localises to the golgi apparatus membrane. Its function is as follows. Activates the ARF proteins by exchanging bound GDP for free GTP. Plays a role in vesicular protein sorting. Acts as the major regulator of retrograde Golgi to endoplasmic reticulum trafficking but is also involved in the endocytosis process. Could function redundantly with GNOM. Regulates vesicle trafficking required for the coordinated polar localization of auxin efflux carriers which in turn determines the direction of auxin flow. Mediates the endocytosis of PIN2 from plasma membrane to endosomal compartments. Required for maintenance of endoplasmic reticulum morphology. This chain is ARF guanine-nucleotide exchange factor GNL1 (GNL1), found in Arabidopsis thaliana (Mouse-ear cress).